The following is a 149-amino-acid chain: Transcriptional repressor NrdR (149 aa).

The segment at 3 to 34 is a zinc-finger region; sequence CPFCAAEETKVVDSRLAADGYQIRRRRECTSC. The ATP-cone domain maps to 49–139; the sequence is PYVIKNNGNR…VYLSFDDIEE (91 aa).

Belongs to the NrdR family. The cofactor is Zn(2+).

Functionally, negatively regulates transcription of bacterial ribonucleotide reductase nrd genes and operons by binding to NrdR-boxes. This is Transcriptional repressor NrdR from Actinobacillus pleuropneumoniae serotype 3 (strain JL03).